A 545-amino-acid polypeptide reads, in one-letter code: Pectinesterase/pectinesterase inhibitor (545 aa).

An N-terminal signal peptide occupies residues 1–37 (MEINQPNLLEASKSCYSKITFFLLVISFAALVSTGFS). The tract at residues 38–191 (SPELSLHHKI…ILRARTSLAI (154 aa)) is pectinesterase inhibitor. The propeptide occupies 38–228 (SPELSLHHKI…RRLLQTLGKD (191 aa)). Residue N135 is glycosylated (N-linked (GlcNAc...) asparagine). Residues 232–530 (DIVVAKDGSG…TVAELIQGGS (299 aa)) are pectinesterase. Positions 307 and 337 each coordinate substrate. Residues C326 and C353 are joined by a disulfide bond. Residue D360 is the Proton donor; for pectinesterase activity of the active site. A glycan (N-linked (GlcNAc...) (complex) asparagine) is linked at N375. Catalysis depends on D381, which acts as the Nucleophile; for pectinesterase activity. C394 and C428 are disulfide-bonded. Positions 449 and 451 each coordinate substrate.

In the N-terminal section; belongs to the PMEI family. This sequence in the C-terminal section; belongs to the pectinesterase family. In terms of processing, N-glycosylated.

The protein resides in the secreted. The protein localises to the cell wall. The enzyme catalyses [(1-&gt;4)-alpha-D-galacturonosyl methyl ester](n) + n H2O = [(1-&gt;4)-alpha-D-galacturonosyl](n) + n methanol + n H(+). It functions in the pathway glycan metabolism; pectin degradation; 2-dehydro-3-deoxy-D-gluconate from pectin: step 1/5. In terms of biological role, acts in the modification of cell walls via demethylesterification of cell wall pectin. This is Pectinesterase/pectinesterase inhibitor from Ficus pumila var. awkeotsang (Jelly fig).